A 187-amino-acid polypeptide reads, in one-letter code: Large ribosomal subunit protein uL5 (187 aa).

It belongs to the universal ribosomal protein uL5 family. Part of the 50S ribosomal subunit; part of the 5S rRNA/L5/L18/L25 subcomplex. Contacts the 5S rRNA and the P site tRNA. Forms a bridge to the 30S subunit in the 70S ribosome.

In terms of biological role, this is one of the proteins that bind and probably mediate the attachment of the 5S RNA into the large ribosomal subunit, where it forms part of the central protuberance. In the 70S ribosome it contacts protein S13 of the 30S subunit (bridge B1b), connecting the 2 subunits; this bridge is implicated in subunit movement. Contacts the P site tRNA; the 5S rRNA and some of its associated proteins might help stabilize positioning of ribosome-bound tRNAs. This Brachyspira hyodysenteriae (strain ATCC 49526 / WA1) protein is Large ribosomal subunit protein uL5.